We begin with the raw amino-acid sequence, 215 residues long: Cytochrome c biogenesis ATP-binding export protein CcmA (215 aa).

The 203-residue stretch at L7–Y209 folds into the ABC transporter domain. G39–T46 is a binding site for ATP.

This sequence belongs to the ABC transporter superfamily. CcmA exporter (TC 3.A.1.107) family. In terms of assembly, the complex is composed of two ATP-binding proteins (CcmA) and two transmembrane proteins (CcmB).

The protein resides in the cell inner membrane. The enzyme catalyses heme b(in) + ATP + H2O = heme b(out) + ADP + phosphate + H(+). In terms of biological role, part of the ABC transporter complex CcmAB involved in the biogenesis of c-type cytochromes; once thought to export heme, this seems not to be the case, but its exact role is uncertain. Responsible for energy coupling to the transport system. This is Cytochrome c biogenesis ATP-binding export protein CcmA from Mannheimia succiniciproducens (strain KCTC 0769BP / MBEL55E).